The chain runs to 116 residues: Nucleoid-associated protein EUBELI_02017 (116 aa).

Over residues 1-12 (MAKRGGFPGGMP) the composition is skewed to gly residues. Residues 1 to 42 (MAKRGGFPGGMPGNMNNLMKQAQRMQRQMEEQQAELENKEFS) are disordered. Low complexity predominate over residues 13-26 (GNMNNLMKQAQRMQ).

It belongs to the YbaB/EbfC family. As to quaternary structure, homodimer.

The protein resides in the cytoplasm. It is found in the nucleoid. Binds to DNA and alters its conformation. May be involved in regulation of gene expression, nucleoid organization and DNA protection. This chain is Nucleoid-associated protein EUBELI_02017, found in Lachnospira eligens (strain ATCC 27750 / DSM 3376 / VPI C15-48 / C15-B4) (Eubacterium eligens).